We begin with the raw amino-acid sequence, 1377 residues long: DNA-directed RNA polymerase subunit beta (1377 aa).

This sequence belongs to the RNA polymerase beta chain family. As to quaternary structure, the RNAP catalytic core consists of 2 alpha, 1 beta, 1 beta' and 1 omega subunit. When a sigma factor is associated with the core the holoenzyme is formed, which can initiate transcription.

The enzyme catalyses RNA(n) + a ribonucleoside 5'-triphosphate = RNA(n+1) + diphosphate. DNA-dependent RNA polymerase catalyzes the transcription of DNA into RNA using the four ribonucleoside triphosphates as substrates. The protein is DNA-directed RNA polymerase subunit beta of Brucella abortus (strain S19).